Reading from the N-terminus, the 184-residue chain is Adenine phosphoribosyltransferase (184 aa).

It belongs to the purine/pyrimidine phosphoribosyltransferase family. In terms of assembly, homodimer.

The protein resides in the cytoplasm. It catalyses the reaction AMP + diphosphate = 5-phospho-alpha-D-ribose 1-diphosphate + adenine. It functions in the pathway purine metabolism; AMP biosynthesis via salvage pathway; AMP from adenine: step 1/1. In terms of biological role, catalyzes a salvage reaction resulting in the formation of AMP, that is energically less costly than de novo synthesis. The sequence is that of Adenine phosphoribosyltransferase from Paracidovorax citrulli (strain AAC00-1) (Acidovorax citrulli).